We begin with the raw amino-acid sequence, 249 residues long: Sulfate transporter CysZ (249 aa).

4 helical membrane-spanning segments follow: residues 26 to 46 (LFVL…IYFA), 71 to 91 (VIWP…FTML), 150 to 170 (LFIL…WLLF), and 206 to 226 (LGFG…ILMM).

Belongs to the CysZ family.

It is found in the cell inner membrane. In terms of biological role, high affinity, high specificity proton-dependent sulfate transporter, which mediates sulfate uptake. Provides the sulfur source for the cysteine synthesis pathway. This chain is Sulfate transporter CysZ, found in Pseudomonas fluorescens (strain ATCC BAA-477 / NRRL B-23932 / Pf-5).